We begin with the raw amino-acid sequence, 841 residues long: pre-rRNA 2'-O-ribose RNA methyltransferase FTSJ3 (841 aa).

Glycine 56, tryptophan 58, aspartate 76, aspartate 92, and aspartate 117 together coordinate S-adenosyl-L-methionine. Lysine 157 functions as the Proton acceptor in the catalytic mechanism. A disordered region spans residues 332–366; sequence ISLSSGEEDEGNEEDSTAGTTEQPSKEEEEEEQLN. Phosphoserine is present on residues serine 333, serine 335, serine 336, serine 347, and serine 356. Over residues 337-347 the composition is skewed to acidic residues; sequence GEEDEGNEEDS. A coiled-coil region spans residues 356-404; the sequence is SKEEEEEEQLNQTLAEMKAQEVAELKRKKKKLLREQRKQRERVELKMDL. A Glycyl lysine isopeptide (Lys-Gly) (interchain with G-Cter in SUMO2) cross-link involves residue lysine 357. Arginine 389 carries the post-translational modification Citrulline. A disordered region spans residues 454–482; that stretch reads VSDVEDDGDDTSLDSDLDPEELAGVRGHQ. The segment covering 456–474 has biased composition (acidic residues); that stretch reads DVEDDGDDTSLDSDLDPEE. Position 547 is a phosphoserine (serine 547). A Phosphothreonine modification is found at threonine 567. Lysine 573 is covalently cross-linked (Glycyl lysine isopeptide (Lys-Gly) (interchain with G-Cter in SUMO2)). Serine 578 bears the Phosphoserine mark. The disordered stretch occupies residues 579–654; that stretch reads PLYQDEAPKG…IVPIEDPAKH (76 aa). Lysine 637 is covalently cross-linked (Glycyl lysine isopeptide (Lys-Gly) (interchain with G-Cter in SUMO2)). Position 638 is a phosphoserine (serine 638). Lysine 653 is covalently cross-linked (Glycyl lysine isopeptide (Lys-Gly) (interchain with G-Cter in SUMO2)). Position 670 is a phosphoserine (serine 670). A Glycyl lysine isopeptide (Lys-Gly) (interchain with G-Cter in SUMO2) cross-link involves residue lysine 672. The residue at position 682 (serine 682) is a Phosphoserine. A Glycyl lysine isopeptide (Lys-Gly) (interchain with G-Cter in SUMO2) cross-link involves residue lysine 704. Positions 733–771 form a coiled coil; that stretch reads IKKVAEAKARKKRRMLKRLEQTRKKAEAVVNTVDISERE. Arginine 777 is modified (citrulline). Basic residues predominate over residues 805–815; sequence VRRPAGVRGHF. The segment at 805–841 is disordered; sequence VRRPAGVRGHFKVVDSRMKKDQRAQQRKEQKKKHKRK. The span at 816–832 shows a compositional bias: basic and acidic residues; that stretch reads KVVDSRMKKDQRAQQRK.

This sequence belongs to the class I-like SAM-binding methyltransferase superfamily. RNA methyltransferase RlmE family. SPB1 subfamily. In terms of assembly, interacts with NIP7. Post-translationally, citrullinated by PADI4.

It is found in the nucleus. Its subcellular location is the nucleolus. The catalysed reaction is a ribonucleotide in rRNA + S-adenosyl-L-methionine = a 2'-O-methylribonucleotide in rRNA + S-adenosyl-L-homocysteine + H(+). Its function is as follows. RNA 2'-O-methyltransferase involved in the processing of the 34S pre-rRNA to 18S rRNA and in 40S ribosomal subunit formation. The protein is pre-rRNA 2'-O-ribose RNA methyltransferase FTSJ3 of Pongo abelii (Sumatran orangutan).